The sequence spans 227 residues: Izumo sperm-egg fusion protein 4 (227 aa).

An N-terminal signal peptide occupies residues 1 to 24 (MFGQGRLGQAMALLLFLGMTAALA). N-linked (GlcNAc...) asparagine glycosylation is found at N153 and N214.

It belongs to the Izumo family.

The protein resides in the secreted. The protein is Izumo sperm-egg fusion protein 4 (Izumo4) of Mus musculus (Mouse).